A 670-amino-acid polypeptide reads, in one-letter code: Pescadillo homolog (670 aa).

The stretch at 292–321 forms a coiled coil; it reads GANQAQAKVKEAESKRSLMEEELLKVRELF. The BRCT domain maps to 316–402; it reads KVRELFRGLT…QMLPVTGYRI (87 aa). The interval 643–670 is disordered; sequence RQRAEAKGKKLKEKKADNPYKKLPKWVQ. A compositionally biased stretch (basic and acidic residues) spans 644 to 662; the sequence is QRAEAKGKKLKEKKADNPY.

It belongs to the pescadillo family.

It localises to the nucleus. Its subcellular location is the nucleolus. It is found in the nucleoplasm. Required for maturation of ribosomal RNAs and formation of the large ribosomal subunit. This chain is Pescadillo homolog, found in Leishmania braziliensis.